The following is a 420-amino-acid chain: Glucose-1-phosphate adenylyltransferase (420 aa).

Residues tyrosine 107, glycine 172, 187–188 (EK), and serine 205 contribute to the alpha-D-glucose 1-phosphate site.

This sequence belongs to the bacterial/plant glucose-1-phosphate adenylyltransferase family. Homotetramer.

The enzyme catalyses alpha-D-glucose 1-phosphate + ATP + H(+) = ADP-alpha-D-glucose + diphosphate. Its pathway is glycan biosynthesis; glycogen biosynthesis. In terms of biological role, involved in the biosynthesis of ADP-glucose, a building block required for the elongation reactions to produce glycogen. Catalyzes the reaction between ATP and alpha-D-glucose 1-phosphate (G1P) to produce pyrophosphate and ADP-Glc. The sequence is that of Glucose-1-phosphate adenylyltransferase from Rhizobium johnstonii (strain DSM 114642 / LMG 32736 / 3841) (Rhizobium leguminosarum bv. viciae).